Consider the following 440-residue polypeptide: tRNA (guanine(37)-N(1))-methyltransferase (440 aa).

S-adenosyl-L-methionine-binding positions include histidine 217, 255 to 256, 283 to 284, and asparagine 315; these read DL and DG.

It belongs to the class I-like SAM-binding methyltransferase superfamily. TRM5/TYW2 family. Monomer.

Its subcellular location is the mitochondrion matrix. The protein resides in the nucleus. The protein localises to the cytoplasm. The enzyme catalyses guanosine(37) in tRNA + S-adenosyl-L-methionine = N(1)-methylguanosine(37) in tRNA + S-adenosyl-L-homocysteine + H(+). Its function is as follows. Specifically methylates the N1 position of guanosine-37 in various cytoplasmic and mitochondrial tRNAs. Methylation is not dependent on the nature of the nucleoside 5' of the target nucleoside. This is the first step in the biosynthesis of wybutosine (yW), a modified base adjacent to the anticodon of tRNAs and required for accurate decoding. The polypeptide is tRNA (guanine(37)-N(1))-methyltransferase (Drosophila pseudoobscura pseudoobscura (Fruit fly)).